Here is a 212-residue protein sequence, read N- to C-terminus: Ribosomal RNA large subunit methyltransferase E (212 aa).

Positions 57, 59, 77, 93, and 122 each coordinate S-adenosyl-L-methionine. The active-site Proton acceptor is Lys-162.

Belongs to the class I-like SAM-binding methyltransferase superfamily. RNA methyltransferase RlmE family.

It is found in the cytoplasm. It catalyses the reaction uridine(2552) in 23S rRNA + S-adenosyl-L-methionine = 2'-O-methyluridine(2552) in 23S rRNA + S-adenosyl-L-homocysteine + H(+). Its function is as follows. Specifically methylates the uridine in position 2552 of 23S rRNA at the 2'-O position of the ribose in the fully assembled 50S ribosomal subunit. This chain is Ribosomal RNA large subunit methyltransferase E, found in Coxiella burnetii (strain RSA 331 / Henzerling II).